Here is a 124-residue protein sequence, read N- to C-terminus: Small ribosomal subunit protein uS12cz/uS12cy (124 aa).

It belongs to the universal ribosomal protein uS12 family. In terms of assembly, part of the 30S ribosomal subunit.

It localises to the plastid. The protein resides in the chloroplast. Its function is as follows. With S4 and S5 plays an important role in translational accuracy. Located at the interface of the 30S and 50S subunits. This is Small ribosomal subunit protein uS12cz/uS12cy (rps12-A) from Zea mays (Maize).